A 297-amino-acid chain; its full sequence is uncharacterized protein (297 aa).

It belongs to the metallo-dependent hydrolases superfamily.

This is an uncharacterized protein from Sinorhizobium fredii (strain NBRC 101917 / NGR234).